The sequence spans 61 residues: Small ribosomal subunit protein uS14B (61 aa).

Residues Cys24, Cys27, Cys40, and Cys43 each contribute to the Zn(2+) site.

Belongs to the universal ribosomal protein uS14 family. Zinc-binding uS14 subfamily. Part of the 30S ribosomal subunit. Contacts proteins S3 and S10. Zn(2+) serves as cofactor.

Its function is as follows. Binds 16S rRNA, required for the assembly of 30S particles and may also be responsible for determining the conformation of the 16S rRNA at the A site. This chain is Small ribosomal subunit protein uS14B, found in Lactococcus lactis subsp. lactis (strain IL1403) (Streptococcus lactis).